The sequence spans 451 residues: UDP-N-acetylmuramoylalanine--D-glutamate ligase (451 aa).

119-125 serves as a coordination point for ATP; the sequence is GSNGKTT.

It belongs to the MurCDEF family.

Its subcellular location is the cytoplasm. The enzyme catalyses UDP-N-acetyl-alpha-D-muramoyl-L-alanine + D-glutamate + ATP = UDP-N-acetyl-alpha-D-muramoyl-L-alanyl-D-glutamate + ADP + phosphate + H(+). Its pathway is cell wall biogenesis; peptidoglycan biosynthesis. Cell wall formation. Catalyzes the addition of glutamate to the nucleotide precursor UDP-N-acetylmuramoyl-L-alanine (UMA). In Geobacillus kaustophilus (strain HTA426), this protein is UDP-N-acetylmuramoylalanine--D-glutamate ligase.